The sequence spans 905 residues: Probable cation-transporting ATPase F (905 aa).

Transmembrane regions (helical) follow at residues 84–104 (EFVD…VGFI), 248–268 (FSKF…GVGL), and 283–303 (ALAV…TLAI). Aspartate 333 acts as the 4-aspartylphosphate intermediate in catalysis. The Mg(2+) site is built by aspartate 643 and aspartate 647. 6 consecutive transmembrane segments (helical) span residues 716 to 736 (ILAA…ILWI), 738 to 758 (MTTA…AGIM), 778 to 798 (TLLV…WELD), 808 to 828 (TAAL…CRSL), 842 to 862 (WIIL…YLPA), and 872 to 892 (IDIG…IVVA).

The protein belongs to the cation transport ATPase (P-type) (TC 3.A.3) family. Type IIA subfamily.

It is found in the cell membrane. The enzyme catalyses ATP + H2O = ADP + phosphate + H(+). The protein is Probable cation-transporting ATPase F (ctpF) of Mycobacterium bovis (strain ATCC BAA-935 / AF2122/97).